The primary structure comprises 483 residues: Probable cytosol aminopeptidase (483 aa).

Mn(2+)-binding residues include Lys-252 and Asp-257. Lys-264 is an active-site residue. Mn(2+) is bound by residues Asp-275, Asp-334, and Glu-336. Arg-338 is a catalytic residue.

It belongs to the peptidase M17 family. Mn(2+) is required as a cofactor.

It is found in the cytoplasm. It carries out the reaction Release of an N-terminal amino acid, Xaa-|-Yaa-, in which Xaa is preferably Leu, but may be other amino acids including Pro although not Arg or Lys, and Yaa may be Pro. Amino acid amides and methyl esters are also readily hydrolyzed, but rates on arylamides are exceedingly low.. The catalysed reaction is Release of an N-terminal amino acid, preferentially leucine, but not glutamic or aspartic acids.. In terms of biological role, presumably involved in the processing and regular turnover of intracellular proteins. Catalyzes the removal of unsubstituted N-terminal amino acids from various peptides. The sequence is that of Probable cytosol aminopeptidase from Legionella pneumophila (strain Corby).